The chain runs to 129 residues: MAAKKVSRKRRVKKNIESGVAHIHSTFNNTIVMITDTHGNALAWSSAGSLGFKGSKKSTPFAAQMAAEAATKVAMEHGLKTVDVTVKGPGSGREAAIRSLQATGLEVTAIRDVTPVPHNGCRPPKRRRV.

It belongs to the universal ribosomal protein uS11 family. In terms of assembly, part of the 30S ribosomal subunit. Interacts with proteins S7 and S18. Binds to IF-3.

Its function is as follows. Located on the platform of the 30S subunit, it bridges several disparate RNA helices of the 16S rRNA. Forms part of the Shine-Dalgarno cleft in the 70S ribosome. This chain is Small ribosomal subunit protein uS11, found in Enterococcus faecalis (strain ATCC 700802 / V583).